The primary structure comprises 466 residues: MEEDDDMAATMEEIVAHAKHRGFVFPGSEIYGGLANTWDYGPLGVELKNNIKRAWWKKFVQESPHNVGLDAAILMNPKTWEASGHLGNFNDPMVDCKQCKARHRADKLIEQALEEKGIEMVVDGLPLAKMEELIREYDIACPECGSRDFTNVRQFNLMFKTYQGVTESSANEIYLRPETAQGIFVNFKNVQRTMRKKLPFGIAQIGKSFRNEITPGNFTFRTREFEQMELEFFCKPGEELKWFDYWKQFCKEWLLSLGMNEEHIRLRDHTKEELSHYSNATTDIEYQFPFGWGELWGIASRTDYDLKQHMEHSGEDFHYLDQETNERYIPYCIEPSLGADRVTLAFMIDAYDEEELEDGTTRTVMHLHPALAPYKAAVLPLSKKLGDGARRIYEELAKHFMVDYDETGSIGKRYRRQDEIGTPFCITYDFESEQDGQVTVRDRDTMEQVRLPIGELKAFLDKKIAF.

Substrate is bound by residues R104 and E178. Residues 210–212, 220–225, 294–295, and 338–341 contribute to the ATP site; these read RNE, FRTREF, EL, and GADR. Residue 225–229 participates in substrate binding; that stretch reads FEQME. 334–338 contacts substrate; the sequence is EPSLG.

This sequence belongs to the class-II aminoacyl-tRNA synthetase family. Homodimer.

The protein resides in the cytoplasm. The catalysed reaction is tRNA(Gly) + glycine + ATP = glycyl-tRNA(Gly) + AMP + diphosphate. Its function is as follows. Catalyzes the attachment of glycine to tRNA(Gly). The sequence is that of Glycine--tRNA ligase from Geobacillus thermodenitrificans (strain NG80-2).